The sequence spans 290 residues: ATP synthase gamma chain (290 aa).

This sequence belongs to the ATPase gamma chain family. In terms of assembly, F-type ATPases have 2 components, CF(1) - the catalytic core - and CF(0) - the membrane proton channel. CF(1) has five subunits: alpha(3), beta(3), gamma(1), delta(1), epsilon(1). CF(0) has three main subunits: a, b and c.

The protein localises to the cell inner membrane. In terms of biological role, produces ATP from ADP in the presence of a proton gradient across the membrane. The gamma chain is believed to be important in regulating ATPase activity and the flow of protons through the CF(0) complex. In Phenylobacterium zucineum (strain HLK1), this protein is ATP synthase gamma chain.